The chain runs to 1486 residues: Chromosome partition protein MukB (1486 aa).

34 to 41 (GGNGAGKS) is a binding site for ATP. 3 coiled-coil regions span residues 326 to 418 (LEAD…QYNQ), 444 to 480 (LETFQAKELEATEKMLSLEQKMSMAQTAHSQFEQAYQ), and 509 to 603 (RHLA…RAPV). Residues 666 to 783 (PGGSEDQRLN…EVPLFGRAAR (118 aa)) are flexible hinge. 3 coiled-coil regions span residues 835 to 923 (EAEI…AKLE), 977 to 1115 (EMLS…TAKA), and 1209 to 1266 (VEAI…QNVS).

It belongs to the SMC family. MukB subfamily. Homodimerization via its hinge domain. Binds to DNA via its C-terminal region. Interacts, and probably forms a ternary complex, with MukE and MukF via its C-terminal region. The complex formation is stimulated by calcium or magnesium. Interacts with tubulin-related protein FtsZ.

The protein resides in the cytoplasm. The protein localises to the nucleoid. Functionally, plays a central role in chromosome condensation, segregation and cell cycle progression. Functions as a homodimer, which is essential for chromosome partition. Involved in negative DNA supercoiling in vivo, and by this means organize and compact chromosomes. May achieve or facilitate chromosome segregation by condensation DNA from both sides of a centrally located replisome during cell division. This Escherichia coli (strain K12 / MC4100 / BW2952) protein is Chromosome partition protein MukB.